Reading from the N-terminus, the 81-residue chain is Apolipoprotein C-I, acidic form (81 aa).

An N-terminal signal peptide occupies residues 1-24; sequence MRLFLSLLVVVLSIVLEGPTPAQG.

The protein belongs to the apolipoprotein C1 family.

The protein resides in the secreted. The polypeptide is Apolipoprotein C-I, acidic form (APOC1A) (Theropithecus gelada (Gelada baboon)).